Reading from the N-terminus, the 126-residue chain is Holo-[acyl-carrier-protein] synthase (126 aa).

2 residues coordinate Mg(2+): Asp-9 and Glu-58.

It belongs to the P-Pant transferase superfamily. AcpS family. Mg(2+) is required as a cofactor.

Its subcellular location is the cytoplasm. The enzyme catalyses apo-[ACP] + CoA = holo-[ACP] + adenosine 3',5'-bisphosphate + H(+). Transfers the 4'-phosphopantetheine moiety from coenzyme A to a Ser of acyl-carrier-protein. The sequence is that of Holo-[acyl-carrier-protein] synthase from Escherichia fergusonii (strain ATCC 35469 / DSM 13698 / CCUG 18766 / IAM 14443 / JCM 21226 / LMG 7866 / NBRC 102419 / NCTC 12128 / CDC 0568-73).